The following is a 407-amino-acid chain: MSRALLIVLDSVGIGGAPDAASYGDEGADTVGHIAASCARGAGDRAGLRQGPLRLPHLAALGLGLAAEAATGRMPPGLAPAGSVTGAWGHAVETARGKDTVSGHWEIAGVPVDFDWGRFPATEPSFPPELTQALIAEAGLPGILGDCHASGTAIIEELGAEQVRTGKPICYTSVDSVFQIAAHEEAFGLERLSAVCAVARRLCDPYRIGRVIARPFTGDARRGFVRTANRRDFATPPPSDTLLDRLVAAGRPVVSVGKIGDIFAHRSTGSEVKPAGNEACLDAALAAFAESGLGPGGLVFVNLVDFDTEYGHRRDVPGYAAALERFDARIPEIRAGLAPGDLCVITADHGNDPTWSGTDHTREQVPVLSFGPGLRPGPLGRRDTFADIGAALAAHLGLPPSCGRSWL.

Mn(2+)-binding residues include D10, D307, H312, D348, H349, and H360.

The protein belongs to the phosphopentomutase family. It depends on Mn(2+) as a cofactor.

The protein resides in the cytoplasm. The catalysed reaction is 2-deoxy-alpha-D-ribose 1-phosphate = 2-deoxy-D-ribose 5-phosphate. It catalyses the reaction alpha-D-ribose 1-phosphate = D-ribose 5-phosphate. Its pathway is carbohydrate degradation; 2-deoxy-D-ribose 1-phosphate degradation; D-glyceraldehyde 3-phosphate and acetaldehyde from 2-deoxy-alpha-D-ribose 1-phosphate: step 1/2. Isomerase that catalyzes the conversion of deoxy-ribose 1-phosphate (dRib-1-P) and ribose 1-phosphate (Rib-1-P) to deoxy-ribose 5-phosphate (dRib-5-P) and ribose 5-phosphate (Rib-5-P), respectively. The polypeptide is Phosphopentomutase (Methylobacterium nodulans (strain LMG 21967 / CNCM I-2342 / ORS 2060)).